The chain runs to 339 residues: Dihydroorotate dehydrogenase (quinone) (339 aa).

Residues 62–66 (AGMDK) and threonine 86 each bind FMN. Lysine 66 contributes to the substrate binding site. 111-115 (NRMGF) is a binding site for substrate. Residues asparagine 139 and asparagine 172 each contribute to the FMN site. Residue asparagine 172 coordinates substrate. Serine 175 (nucleophile) is an active-site residue. Residue asparagine 177 participates in substrate binding. The FMN site is built by lysine 217 and threonine 245. 246 to 247 (NT) contributes to the substrate binding site. FMN-binding positions include glycine 268, glycine 297, and 318-319 (YS).

This sequence belongs to the dihydroorotate dehydrogenase family. Type 2 subfamily. Monomer. FMN serves as cofactor.

It is found in the cell membrane. The enzyme catalyses (S)-dihydroorotate + a quinone = orotate + a quinol. Its pathway is pyrimidine metabolism; UMP biosynthesis via de novo pathway; orotate from (S)-dihydroorotate (quinone route): step 1/1. Catalyzes the conversion of dihydroorotate to orotate with quinone as electron acceptor. This chain is Dihydroorotate dehydrogenase (quinone), found in Shewanella baltica (strain OS185).